The chain runs to 164 residues: HTH-type transcriptional regulator IscR (164 aa).

Residues 2 to 131 (RLTSKGRYAV…NNITLAELVN (130 aa)) enclose the HTH rrf2-type domain. The H-T-H motif DNA-binding region spans 28–51 (LADISERQGISLSYLEQLFSRLRK). [2Fe-2S] cluster contacts are provided by cysteine 92, cysteine 98, and cysteine 104. The tract at residues 143–164 (NNDTRRTANGRPQETINVNLRA) is disordered. Polar residues predominate over residues 152–164 (GRPQETINVNLRA).

The cofactor is [2Fe-2S] cluster.

Its function is as follows. Regulates the transcription of several operons and genes involved in the biogenesis of Fe-S clusters and Fe-S-containing proteins. The protein is HTH-type transcriptional regulator IscR of Yersinia enterocolitica serotype O:8 / biotype 1B (strain NCTC 13174 / 8081).